We begin with the raw amino-acid sequence, 178 residues long: Imidazoleglycerol-phosphate dehydratase (178 aa).

It belongs to the imidazoleglycerol-phosphate dehydratase family.

The protein localises to the cytoplasm. The enzyme catalyses D-erythro-1-(imidazol-4-yl)glycerol 3-phosphate = 3-(imidazol-4-yl)-2-oxopropyl phosphate + H2O. Its pathway is amino-acid biosynthesis; L-histidine biosynthesis; L-histidine from 5-phospho-alpha-D-ribose 1-diphosphate: step 6/9. This chain is Imidazoleglycerol-phosphate dehydratase, found in Archaeoglobus fulgidus (strain ATCC 49558 / DSM 4304 / JCM 9628 / NBRC 100126 / VC-16).